A 256-amino-acid polypeptide reads, in one-letter code: Ciliary microtubule associated protein 1A (256 aa).

3 STPGR repeats span residues 66–92, 181–206, and 217–242; these read PGPG…IYGR, PGPG…MTAR, and PGPG…FGIR.

The protein belongs to the CIMAP family.

Its subcellular location is the cytoplasm. It localises to the cytoskeleton. It is found in the flagellum axoneme. Outer dense fibers are filamentous structures located on the outside of the axoneme in the midpiece and principal piece of the mammalian sperm tail. May help to maintain the passive elastic structures and elastic recoil of the sperm tail. This is Ciliary microtubule associated protein 1A (cimap1a) from Xenopus tropicalis (Western clawed frog).